Here is a 447-residue protein sequence, read N- to C-terminus: Chordin-like protein 1 (447 aa).

The first 22 residues, 1-22 (MEGIKYIASLVFFFVFLEASKT), serve as a signal peptide directing secretion. 2 consecutive VWFC domains span residues 30–95 (TYCM…PRCP) and 108–174 (KSCE…RVCR). The N-linked (GlcNAc...) asparagine glycan is linked to asparagine 113. The short motif at 174-176 (RGD) is the Cell attachment site element. Positions 199 to 219 (HSYLRSPYDPPPSRQAGGLPR) are disordered. The 66-residue stretch at 253–318 (QVCVSNGKTY…LDGKCCKVCP (66 aa)) folds into the VWFC 3 domain. An N-linked (GlcNAc...) asparagine glycan is attached at asparagine 286.

It is found in the secreted. Functionally, seems to antagonize the function of BMP4 by binding to it and preventing its interaction with receptors. Alters the fate commitment of neural stem cells from gliogenesis to neurogenesis. Contributes to neuronal differentiation of neural stem cells in the brain by preventing the adoption of a glial fate. May play a crucial role in dorsoventral axis formation. May play a role in embryonic bone formation. Plays a role during anterior segment eye development. The chain is Chordin-like protein 1 (Chrdl1) from Rattus norvegicus (Rat).